Here is a 241-residue protein sequence, read N- to C-terminus: 1-(5-phosphoribosyl)-5-[(5-phosphoribosylamino)methylideneamino] imidazole-4-carboxamide isomerase (241 aa).

D7 acts as the Proton acceptor in catalysis. D129 functions as the Proton donor in the catalytic mechanism.

Belongs to the HisA/HisF family.

It is found in the cytoplasm. It catalyses the reaction 1-(5-phospho-beta-D-ribosyl)-5-[(5-phospho-beta-D-ribosylamino)methylideneamino]imidazole-4-carboxamide = 5-[(5-phospho-1-deoxy-D-ribulos-1-ylimino)methylamino]-1-(5-phospho-beta-D-ribosyl)imidazole-4-carboxamide. The protein operates within amino-acid biosynthesis; L-histidine biosynthesis; L-histidine from 5-phospho-alpha-D-ribose 1-diphosphate: step 4/9. The sequence is that of 1-(5-phosphoribosyl)-5-[(5-phosphoribosylamino)methylideneamino] imidazole-4-carboxamide isomerase from Buchnera aphidicola subsp. Baizongia pistaciae (strain Bp).